The primary structure comprises 130 residues: Small ribosomal subunit protein uS11c (130 aa).

It belongs to the universal ribosomal protein uS11 family. In terms of assembly, part of the 30S ribosomal subunit.

Its subcellular location is the plastid. The protein localises to the chloroplast. The sequence is that of Small ribosomal subunit protein uS11c from Spirogyra maxima (Green alga).